The primary structure comprises 34 residues: Leader peptide SpeFL (34 aa).

Positions 10–16 (HIRRTTH) match the Ornithine recognition loop motif. R13 contacts L-ornithine.

It belongs to the speF operon leader peptide family. As to quaternary structure, binds ornithine in stalled 70S ribosomes, blocking the upper two-thirds of the exit tunnel. Contacts 23S rRNA and ribosomal proteins L4 and L22.

A small protein (arrest peptide) encoded upstream of inducible ornithine carboxylase gene (speF) that controls expression of downstream genes (speF and potE) by transcriptional and translational attenuation. Its expression controls transcription and translation of downstream SpeF; translation pausing at low Arg levels on this mRNA prevents premature Rho-dependent transcription termination of speF and also enhances SprF translation by preventing sequestration of its ribosome-binding site. In the presence of high Arg levels translation of this protein allows the formation of an speF mRNA structure that is degraded by RNase G. This Salmonella typhimurium (strain SL1344) protein is Leader peptide SpeFL.